Reading from the N-terminus, the 103-residue chain is Enhancer of rudimentary homolog (103 aa).

It belongs to the E(R) family. As to quaternary structure, homodimer.

Functionally, may have a role in the cell cycle. The polypeptide is Enhancer of rudimentary homolog (Aedes aegypti (Yellowfever mosquito)).